We begin with the raw amino-acid sequence, 80 residues long: Cytochrome c-553 (80 aa).

Residues cysteine 13, cysteine 16, histidine 17, and methionine 58 each contribute to the heme c site.

Post-translationally, binds 1 heme c group covalently per subunit.

Its subcellular location is the periplasm. Functionally, natural electron acceptor for a formate dehydrogenase. The protein is Cytochrome c-553 of Desulfomicrobium norvegicum (strain DSM 1741 / NCIMB 8310) (Desulfovibrio baculatus (strain Norway 4)).